Consider the following 239-residue polypeptide: Probable transcriptional regulatory protein MG332 (239 aa).

It belongs to the TACO1 family.

The protein resides in the cytoplasm. This is Probable transcriptional regulatory protein MG332 from Mycoplasma genitalium (strain ATCC 33530 / DSM 19775 / NCTC 10195 / G37) (Mycoplasmoides genitalium).